Consider the following 596-residue polypeptide: Uptake hydrogenase large subunit (596 aa).

Cys75, Cys78, Cys575, and Cys578 together coordinate Ni(2+).

This sequence belongs to the [NiFe]/[NiFeSe] hydrogenase large subunit family. In terms of assembly, heterodimer of a large and a small subunit. Requires Ni(2+) as cofactor.

The protein resides in the cell membrane. It carries out the reaction H2 + A = AH2. In terms of biological role, this enzyme recycles the H(2) produced by nitrogenase to increase the production of ATP and to protect nitrogenase against inhibition or damage by O(2) under carbon- or phosphate-limited conditions. This chain is Uptake hydrogenase large subunit (hupB), found in Bradyrhizobium diazoefficiens (strain JCM 10833 / BCRC 13528 / IAM 13628 / NBRC 14792 / USDA 110).